Here is a 232-residue protein sequence, read N- to C-terminus: 2,3,4,5-tetrahydropyridine-2,6-dicarboxylate N-acetyltransferase (232 aa).

The protein belongs to the transferase hexapeptide repeat family. DapH subfamily.

It carries out the reaction (S)-2,3,4,5-tetrahydrodipicolinate + acetyl-CoA + H2O = L-2-acetamido-6-oxoheptanedioate + CoA. Its pathway is amino-acid biosynthesis; L-lysine biosynthesis via DAP pathway; LL-2,6-diaminopimelate from (S)-tetrahydrodipicolinate (acetylase route): step 1/3. Catalyzes the transfer of an acetyl group from acetyl-CoA to tetrahydrodipicolinate. The polypeptide is 2,3,4,5-tetrahydropyridine-2,6-dicarboxylate N-acetyltransferase (Streptococcus thermophilus (strain CNRZ 1066)).